Here is a 621-residue protein sequence, read N- to C-terminus: SH2B adapter protein 2 (621 aa).

A Phosphotyrosine modification is found at Tyr-47. Phosphoserine is present on Ser-130. The interval 143-166 is disordered; sequence RRSSPEPDGGATPKAAEPASEPRD. The PH domain occupies 186 to 299; sequence DIQREGALRF…WVADIQGCVD (114 aa). Ser-303 bears the Phosphoserine mark. In terms of domain architecture, SH2 spans 409–507; it reads WFHGTLSRVK…SADITLRSYV (99 aa). Disordered regions lie at residues 507–528 and 549–611; these read VRAQ…PVPA and PASP…LGRA. A compositionally biased stretch (low complexity) spans 552 to 571; sequence PSNGAGASSSSGSSSSATSL. Ser-597 carries the post-translational modification Phosphoserine. Position 618 is a phosphotyrosine (Tyr-618).

This sequence belongs to the SH2B adapter family. Homodimer. Interacts with KIT/c-KIT, SHC1, EPOR, PDGFR, VAV1 and VAV3. Interacts (via N-terminal region) with SHC1. Interacts (via the phosphorylated C-terminus) with GRB2. Interacts (via its SH2 domain) with EPOR, INSR and KIT. Interacts with GRB2 after B-cell antigen receptor stimulation. Interacts (via PH domain) with VAV3. Interacts with NTRK1, NTRK2 and NTRK3 (phosphorylated); after stimulation of the receptor by its extracellular ligand and subsequent autophosphorylation of the receptor. Binds INSR, GRB2, ASB6 and CAP. Insulin stimulation leads to dissociation of CAP. Binds CBS only when SH2B2/APS has become phosphorylated. INSR binding does not depend on the phosphorylation of SH2B2/APS. Tyrosine phosphorylated by JAK2, KIT and other kinases activated by B-cell receptor in response to stimulation with cytokines, IL3, IL5, PDGF, IGF1, IGF2, CSF2/GM-CSF and cross-linking of the B-cell receptor complex. As to expression, strongly expressed in brain; also expressed in spleen, kidney and skeletal muscle, and at low levels in small intestine and bone marrow. Strongly expressed in B-cell lines, but not T-cell lines. Also expressed in myeloid and fibroblast cell lines.

It localises to the cytoplasm. The protein localises to the cell membrane. Its function is as follows. Adapter protein for several members of the tyrosine kinase receptor family. Involved in multiple signaling pathways. May be involved in coupling from immunoreceptor to Ras signaling. Acts as a negative regulator of cytokine signaling in collaboration with CBL. Binds to EPOR and suppresses EPO-induced STAT5 activation, possibly through a masking effect on STAT5 docking sites in EPOR. Suppresses PDGF-induced mitogenesis. May induce cytoskeletal reorganization via interaction with VAV3. This chain is SH2B adapter protein 2 (Sh2b2), found in Mus musculus (Mouse).